The chain runs to 332 residues: DNA-directed RNA polymerase subunit alpha (332 aa).

Residues 1–232 (MQVSNFLKPR…DQLTAFVELE (232 aa)) are alpha N-terminal domain (alpha-NTD). The alpha C-terminal domain (alpha-CTD) stretch occupies residues 246–332 (IDPVLLQPID…LREEETKVTA (87 aa)).

It belongs to the RNA polymerase alpha chain family. Homodimer. The RNAP catalytic core consists of 2 alpha, 1 beta, 1 beta' and 1 omega subunit. When a sigma factor is associated with the core the holoenzyme is formed, which can initiate transcription.

The catalysed reaction is RNA(n) + a ribonucleoside 5'-triphosphate = RNA(n+1) + diphosphate. DNA-dependent RNA polymerase catalyzes the transcription of DNA into RNA using the four ribonucleoside triphosphates as substrates. The chain is DNA-directed RNA polymerase subunit alpha from Nitrosococcus oceani (strain ATCC 19707 / BCRC 17464 / JCM 30415 / NCIMB 11848 / C-107).